A 399-amino-acid polypeptide reads, in one-letter code: Tryptophan synthase beta chain (399 aa).

At K92 the chain carries N6-(pyridoxal phosphate)lysine.

It belongs to the TrpB family. Tetramer of two alpha and two beta chains. Pyridoxal 5'-phosphate is required as a cofactor.

It catalyses the reaction (1S,2R)-1-C-(indol-3-yl)glycerol 3-phosphate + L-serine = D-glyceraldehyde 3-phosphate + L-tryptophan + H2O. The protein operates within amino-acid biosynthesis; L-tryptophan biosynthesis; L-tryptophan from chorismate: step 5/5. Its function is as follows. The beta subunit is responsible for the synthesis of L-tryptophan from indole and L-serine. The sequence is that of Tryptophan synthase beta chain from Thiobacillus denitrificans (strain ATCC 25259 / T1).